A 312-amino-acid polypeptide reads, in one-letter code: Src-like-adapter (312 aa).

The disordered stretch occupies residues 1–33; the sequence is MLCRLPGPSTSRGEKEMGNSMKSTPAPLERPLS. Positions 38–98 constitute an SH3 domain; that stretch reads LESDFLAVLN…PGICVARVYH (61 aa). Residues 100–191 form the SH2 domain; sequence WLFEGLGRDK…GLCCVLTTPC (92 aa). The SLA C-terminal stretch occupies residues 206–312; that stretch reads CTSPGSPVTL…TQKTKALTAT (107 aa). S274 bears the Phosphoserine mark.

In terms of assembly, homodimer. Interacts with phosphorylated CBL, SYK and LAT. Homodimerization and interaction with phosphorylated CBL occurs via its C-terminal domain. Interacts with PDGFRB and EPHA2. Interacts with phosphorylated proteins ZAP70; CD3Z; VAV1 and LCP2 via its SH2 domain. Post-translationally, phosphorylated.

The protein resides in the cytoplasm. It localises to the endosome. In terms of biological role, adapter protein, which negatively regulates T-cell receptor (TCR) signaling. Inhibits T-cell antigen-receptor induced activation of nuclear factor of activated T-cells. Involved in the negative regulation of positive selection and mitosis of T-cells. May act by linking signaling proteins such as ZAP70 with CBL, leading to a CBL dependent degradation of signaling proteins. This is Src-like-adapter (Sla) from Rattus norvegicus (Rat).